The sequence spans 600 residues: Melanophilin (600 aa).

The RabBD domain maps to 4–124 (KLDLSKLTDE…IGSLEWYYEH (121 aa)). Residues 64–107 (CARCLQPYQLLVNSKRQCLECGLFTCKSCGRVHPEEQGWICDPC) form an FYVE-type zinc finger. Disordered regions lie at residues 146-277 (QGGA…AELC), 390-465 (EELT…LSEL), 499-541 (TVKP…AKAM), and 553-600 (NSLK…AHQS). 2 stretches are compositionally biased toward basic and acidic residues: residues 232–243 (CSEKAAPHKAEG) and 409–420 (KDEKAEPNRDKS). The stretch at 373-496 (GVRTEADVEE…ESRIAALRAA (124 aa)) forms a coiled coil. The span at 558–569 (QGKDDDSFDRKS) shows a compositional bias: basic and acidic residues.

As to quaternary structure, binds RAB27A that has been activated by GTP-binding via its N-terminus. Binds MYO5A via its C-terminal coiled coil domain.

The protein resides in the cytoplasm. In terms of biological role, rab effector protein involved in melanosome transport. Serves as link between melanosome-bound RAB27A and the motor protein MYO5A. The protein is Melanophilin (MLPH) of Homo sapiens (Human).